A 325-amino-acid chain; its full sequence is UDP-N-acetylenolpyruvoylglucosamine reductase (325 aa).

One can recognise an FAD-binding PCMH-type domain in the interval 40-221 (RTGGLAELFY…RAAMDEVALH (182 aa)). R186 is a catalytic residue. S235 functions as the Proton donor in the catalytic mechanism. E305 is a catalytic residue.

This sequence belongs to the MurB family. It depends on FAD as a cofactor.

The protein localises to the cytoplasm. The catalysed reaction is UDP-N-acetyl-alpha-D-muramate + NADP(+) = UDP-N-acetyl-3-O-(1-carboxyvinyl)-alpha-D-glucosamine + NADPH + H(+). The protein operates within cell wall biogenesis; peptidoglycan biosynthesis. Functionally, cell wall formation. The sequence is that of UDP-N-acetylenolpyruvoylglucosamine reductase from Bartonella henselae (strain ATCC 49882 / DSM 28221 / CCUG 30454 / Houston 1) (Rochalimaea henselae).